A 129-amino-acid polypeptide reads, in one-letter code: Lysozyme C (129 aa).

A C-type lysozyme domain is found at K1–L129. 4 disulfides stabilise this stretch: C6-C127, C30-C115, C64-C80, and C76-C94. Catalysis depends on residues E35 and D52.

The protein belongs to the glycosyl hydrolase 22 family. Monomer.

Its subcellular location is the secreted. It catalyses the reaction Hydrolysis of (1-&gt;4)-beta-linkages between N-acetylmuramic acid and N-acetyl-D-glucosamine residues in a peptidoglycan and between N-acetyl-D-glucosamine residues in chitodextrins.. Functionally, lysozymes have primarily a bacteriolytic function; those in tissues and body fluids are associated with the monocyte-macrophage system and enhance the activity of immunoagents. The sequence is that of Lysozyme C (LYZ) from Chrysolophus amherstiae (Lady Amherst's pheasant).